The sequence spans 488 residues: Bifunctional protein HldE (488 aa).

The tract at residues 1–327 is ribokinase; the sequence is MDDTLAKLPR…GLAHGEHADP (327 aa). An ATP-binding site is contributed by 201-204; the sequence is NRRE. The active site involves aspartate 272. The tract at residues 354–488 is cytidylyltransferase; the sequence is FTNGCFDLLH…GRMNAPAVGG (135 aa).

This sequence in the N-terminal section; belongs to the carbohydrate kinase PfkB family. The protein in the C-terminal section; belongs to the cytidylyltransferase family. As to quaternary structure, homodimer.

The catalysed reaction is D-glycero-beta-D-manno-heptose 7-phosphate + ATP = D-glycero-beta-D-manno-heptose 1,7-bisphosphate + ADP + H(+). The enzyme catalyses D-glycero-beta-D-manno-heptose 1-phosphate + ATP + H(+) = ADP-D-glycero-beta-D-manno-heptose + diphosphate. It functions in the pathway nucleotide-sugar biosynthesis; ADP-L-glycero-beta-D-manno-heptose biosynthesis; ADP-L-glycero-beta-D-manno-heptose from D-glycero-beta-D-manno-heptose 7-phosphate: step 1/4. It participates in nucleotide-sugar biosynthesis; ADP-L-glycero-beta-D-manno-heptose biosynthesis; ADP-L-glycero-beta-D-manno-heptose from D-glycero-beta-D-manno-heptose 7-phosphate: step 3/4. Its function is as follows. Catalyzes the phosphorylation of D-glycero-D-manno-heptose 7-phosphate at the C-1 position to selectively form D-glycero-beta-D-manno-heptose-1,7-bisphosphate. In terms of biological role, catalyzes the ADP transfer from ATP to D-glycero-beta-D-manno-heptose 1-phosphate, yielding ADP-D-glycero-beta-D-manno-heptose. This Caulobacter sp. (strain K31) protein is Bifunctional protein HldE.